The primary structure comprises 226 residues: ATP-dependent dethiobiotin synthetase BioD (226 aa).

ATP is bound at residue 12-17 (GVGKTV). Position 16 (T16) interacts with Mg(2+). The active site involves K37. T41 lines the substrate pocket. Residues D49, 108–111 (EGAG), and 169–170 (GS) contribute to the ATP site. Mg(2+)-binding residues include D49 and E108.

The protein belongs to the dethiobiotin synthetase family. Homodimer. Requires Mg(2+) as cofactor.

It is found in the cytoplasm. The enzyme catalyses (7R,8S)-7,8-diammoniononanoate + CO2 + ATP = (4R,5S)-dethiobiotin + ADP + phosphate + 3 H(+). It participates in cofactor biosynthesis; biotin biosynthesis; biotin from 7,8-diaminononanoate: step 1/2. Catalyzes a mechanistically unusual reaction, the ATP-dependent insertion of CO2 between the N7 and N8 nitrogen atoms of 7,8-diaminopelargonic acid (DAPA, also called 7,8-diammoniononanoate) to form a ureido ring. The chain is ATP-dependent dethiobiotin synthetase BioD from Mycobacterium marinum (strain ATCC BAA-535 / M).